The sequence spans 257 residues: tRNA (guanine-N(1)-)-methyltransferase (257 aa).

Residues glycine 113 and 133–138 each bind S-adenosyl-L-methionine; that span reads IGDYVL.

The protein belongs to the RNA methyltransferase TrmD family. In terms of assembly, homodimer.

It localises to the cytoplasm. It catalyses the reaction guanosine(37) in tRNA + S-adenosyl-L-methionine = N(1)-methylguanosine(37) in tRNA + S-adenosyl-L-homocysteine + H(+). Its function is as follows. Specifically methylates guanosine-37 in various tRNAs. This Cronobacter sakazakii (strain ATCC BAA-894) (Enterobacter sakazakii) protein is tRNA (guanine-N(1)-)-methyltransferase.